A 298-amino-acid chain; its full sequence is Ectoine dioxygenase (298 aa).

The segment covering 1-18 (MLQQAIDRDPVDRIDRYP) has biased composition (basic and acidic residues). The segment at 1–26 (MLQQAIDRDPVDRIDRYPTRTAEPAP) is disordered. Position 133 (Gln-133) interacts with L-ectoine. 3 residues coordinate Fe cation: His-150, Asp-152, and His-251.

This sequence belongs to the PhyH family. EctD subfamily. In terms of assembly, homodimer. It depends on Fe(2+) as a cofactor.

It catalyses the reaction L-ectoine + 2-oxoglutarate + O2 = 5-hydroxyectoine + succinate + CO2. Involved in the biosynthesis of 5-hydroxyectoine, called compatible solute, which helps organisms to survive extreme osmotic stress by acting as a highly soluble organic osmolyte. Catalyzes the 2-oxoglutarate-dependent selective hydroxylation of L-ectoine to yield (4S,5S)-5-hydroxyectoine. The sequence is that of Ectoine dioxygenase from Nocardia farcinica (strain IFM 10152).